The sequence spans 216 residues: MDLGICKRCGEFEGSCECGKGEVLLKSEDRKKVSKFLSGLLRHFGRDFGVRLDEDGWAELRDVLKILSERYGVGRKHVELIVKFDPKGRFELKNGRIRAKYGHSVEVRTDWSEGGEIPEKLYHATSPENLNSILKTGLLPMRRREVHMCSSPQEAIEVGKRHSSNPVLLEIDAKGLMQDGIEVRRKGKVYTVDFVPPKFIRVLSFDPRSPNPAKGY.

Belongs to the KptA/TPT1 family.

Removes the 2'-phosphate from RNA via an intermediate in which the phosphate is ADP-ribosylated by NAD followed by a presumed transesterification to release the RNA and generate ADP-ribose 1''-2''-cyclic phosphate (APPR&gt;P). May function as an ADP-ribosylase. In Archaeoglobus fulgidus (strain ATCC 49558 / DSM 4304 / JCM 9628 / NBRC 100126 / VC-16), this protein is Probable RNA 2'-phosphotransferase 2 (kptA2).